A 291-amino-acid chain; its full sequence is Syntaxin-1A homolog (291 aa).

A disordered region spans residues 1–24 (MTKDRLSALKAAQSEDEQDDDMHM). The Cytoplasmic segment spans residues 1–266 (MTKDRLSALK…QYQSKARRKK (266 aa)). Residues 69-95 (NDQKTKEELDELMAVIKRAANKVRGKL) are a coiled coil. The 63-residue stretch at 193–255 (LADIEARHND…DRAVADTKKA (63 aa)) folds into the t-SNARE coiled-coil homology domain. Residues 267 to 287 (ICILVTGVILITGLIIFILFY) form a helical; Anchor for type IV membrane protein membrane-spanning segment. The Extracellular portion of the chain corresponds to 288-291 (AKVL).

This sequence belongs to the syntaxin family. As to quaternary structure, interacts (via N-terminus, in open or in closed conformation) with unc-18; the interaction is direct. Interaction in open conformation with unc-18 promotes synaptic vesicle docking and tethering. Interaction via N-terminus with unc-18 mediates the secretion of the neurotransmitter acetylcholine from cholinergic motor neurons. Interaction with unc-18 is reduced in the presence of unc-13. As to expression, expressed throughout the head ganglion, nerve ring, ventral cord, dorsal cord, intestine, vulva and spermatheca.

It is found in the cell membrane. The protein localises to the cell projection. It localises to the axon. The protein resides in the dendrite. Its subcellular location is the perikaryon. Plays a critical role in several secretory processes, including cuticle secretion and neurotransmitter release, and probably assists in neuronal membrane maturation or the final stages of neuronal differentiation. Plays a role in synaptic vesicle docking and tethering through its association with unc-18. Through binding to unc-18 mediates the release of the neurotransmitter acetylcholine from cholinergic motor neurons, and thereby promotes locomotory behaviors. Essential for embryonic viability and development. Has a role in dauer formation and adult life span. Required for locomotion. Probably by regulating neuronal transmission downstream of lin-3 and receptor lin-23 and phospholipase plc-3 and upstream of innexin unc-7 and egl-4/PKG in ALA neurons, involved in the decrease in pharyngeal pumping during the quiescent state that precedes each larval molt. In Caenorhabditis elegans, this protein is Syntaxin-1A homolog.